A 243-amino-acid chain; its full sequence is Ubiquinone/menaquinone biosynthesis C-methyltransferase UbiE (243 aa).

Residues Thr-69, Asp-90, and 116–117 (DA) each bind S-adenosyl-L-methionine.

This sequence belongs to the class I-like SAM-binding methyltransferase superfamily. MenG/UbiE family.

It carries out the reaction a 2-demethylmenaquinol + S-adenosyl-L-methionine = a menaquinol + S-adenosyl-L-homocysteine + H(+). The catalysed reaction is a 2-methoxy-6-(all-trans-polyprenyl)benzene-1,4-diol + S-adenosyl-L-methionine = a 5-methoxy-2-methyl-3-(all-trans-polyprenyl)benzene-1,4-diol + S-adenosyl-L-homocysteine + H(+). The protein operates within quinol/quinone metabolism; menaquinone biosynthesis; menaquinol from 1,4-dihydroxy-2-naphthoate: step 2/2. It functions in the pathway cofactor biosynthesis; ubiquinone biosynthesis. Functionally, methyltransferase required for the conversion of demethylmenaquinol (DMKH2) to menaquinol (MKH2) and the conversion of 2-polyprenyl-6-methoxy-1,4-benzoquinol (DDMQH2) to 2-polyprenyl-3-methyl-6-methoxy-1,4-benzoquinol (DMQH2). This is Ubiquinone/menaquinone biosynthesis C-methyltransferase UbiE from Cupriavidus metallidurans (strain ATCC 43123 / DSM 2839 / NBRC 102507 / CH34) (Ralstonia metallidurans).